The chain runs to 295 residues: N-acetylmuramic acid 6-phosphate etherase (295 aa).

One can recognise an SIS domain in the interval 54-217; sequence VIAAFRRGGR…STASMVGIGK (164 aa). E82 (proton donor) is an active-site residue. E113 is an active-site residue.

This sequence belongs to the GCKR-like family. MurNAc-6-P etherase subfamily. In terms of assembly, homodimer.

It catalyses the reaction N-acetyl-D-muramate 6-phosphate + H2O = N-acetyl-D-glucosamine 6-phosphate + (R)-lactate. It participates in amino-sugar metabolism; N-acetylmuramate degradation. Functionally, specifically catalyzes the cleavage of the D-lactyl ether substituent of MurNAc 6-phosphate, producing GlcNAc 6-phosphate and D-lactate. The chain is N-acetylmuramic acid 6-phosphate etherase from Geobacillus thermodenitrificans (strain NG80-2).